Reading from the N-terminus, the 275-residue chain is Large ribosomal subunit protein uL2 (275 aa).

Disordered stretches follow at residues 36–55 and 223–275; these read KQSK…RHQG and VAMN…RHKR. A compositionally biased stretch (polar residues) spans 39 to 48; sequence KNAGRNNSGR. Positions 229 to 239 are enriched in basic and acidic residues; that stretch reads DHPHGGGEGRT.

This sequence belongs to the universal ribosomal protein uL2 family. Part of the 50S ribosomal subunit. Forms a bridge to the 30S subunit in the 70S ribosome.

In terms of biological role, one of the primary rRNA binding proteins. Required for association of the 30S and 50S subunits to form the 70S ribosome, for tRNA binding and peptide bond formation. It has been suggested to have peptidyltransferase activity; this is somewhat controversial. Makes several contacts with the 16S rRNA in the 70S ribosome. This chain is Large ribosomal subunit protein uL2, found in Aromatoleum aromaticum (strain DSM 19018 / LMG 30748 / EbN1) (Azoarcus sp. (strain EbN1)).